The chain runs to 372 residues: 4-hydroxy-3-methylbut-2-en-1-yl diphosphate synthase (flavodoxin) (372 aa).

[4Fe-4S] cluster-binding residues include cysteine 270, cysteine 273, cysteine 305, and glutamate 312.

It belongs to the IspG family. Requires [4Fe-4S] cluster as cofactor.

It carries out the reaction (2E)-4-hydroxy-3-methylbut-2-enyl diphosphate + oxidized [flavodoxin] + H2O + 2 H(+) = 2-C-methyl-D-erythritol 2,4-cyclic diphosphate + reduced [flavodoxin]. The protein operates within isoprenoid biosynthesis; isopentenyl diphosphate biosynthesis via DXP pathway; isopentenyl diphosphate from 1-deoxy-D-xylulose 5-phosphate: step 5/6. In terms of biological role, converts 2C-methyl-D-erythritol 2,4-cyclodiphosphate (ME-2,4cPP) into 1-hydroxy-2-methyl-2-(E)-butenyl 4-diphosphate. This chain is 4-hydroxy-3-methylbut-2-en-1-yl diphosphate synthase (flavodoxin), found in Cronobacter sakazakii (strain ATCC BAA-894) (Enterobacter sakazakii).